The primary structure comprises 87 residues: Ragulator complex protein LAMTOR4 homolog (87 aa).

The protein belongs to the LAMTOR4 family. Part of the Ragulator complex.

It localises to the lysosome. Regulator of the TOR pathway, a signaling cascade that promotes cell growth in response to growth factors, energy levels, and amino acids. As part of the Ragulator complex, may activate the TOR signaling cascade in response to amino acids. In Dictyostelium discoideum (Social amoeba), this protein is Ragulator complex protein LAMTOR4 homolog.